A 214-amino-acid polypeptide reads, in one-letter code: Large ribosomal subunit protein uL3 (214 aa).

The segment at 134 to 153 (ATHGNSLSHRAPGSIGQNQT) is disordered. Q152 carries the post-translational modification N5-methylglutamine.

Belongs to the universal ribosomal protein uL3 family. In terms of assembly, part of the 50S ribosomal subunit. Forms a cluster with proteins L14 and L19. Methylated by PrmB.

Its function is as follows. One of the primary rRNA binding proteins, it binds directly near the 3'-end of the 23S rRNA, where it nucleates assembly of the 50S subunit. This is Large ribosomal subunit protein uL3 from Buchnera aphidicola subsp. Baizongia pistaciae (strain Bp).